The chain runs to 102 residues: Large ribosomal subunit protein mL63 (102 aa).

Belongs to the mitochondrion-specific ribosomal protein mL63 family.

It is found in the mitochondrion. This chain is Large ribosomal subunit protein mL63 (Mrpl57), found in Mus musculus (Mouse).